Consider the following 196-residue polypeptide: Putative manganese efflux pump MntP (196 aa).

Transmembrane regions (helical) follow at residues P3 to G23, I39 to H59, G67 to A87, I109 to T129, I137 to L157, and I172 to G192.

Belongs to the MntP (TC 9.B.29) family.

Its subcellular location is the cell inner membrane. Its function is as follows. Probably functions as a manganese efflux pump. The chain is Putative manganese efflux pump MntP from Chromohalobacter salexigens (strain ATCC BAA-138 / DSM 3043 / CIP 106854 / NCIMB 13768 / 1H11).